The following is a 67-amino-acid chain: Large ribosomal subunit protein uL29 (67 aa).

Belongs to the universal ribosomal protein uL29 family.

The chain is Large ribosomal subunit protein uL29 from Sorangium cellulosum (strain So ce56) (Polyangium cellulosum (strain So ce56)).